The following is a 248-amino-acid chain: 2,3-bisphosphoglycerate-dependent phosphoglycerate mutase (248 aa).

Substrate-binding positions include 8-15, 21-22, R60, 87-90, K98, and 114-115; these read RHGESVWN, TG, ERHY, and RR. The active-site Tele-phosphohistidine intermediate is the H9. E87 serves as the catalytic Proton donor/acceptor. Positions 116 to 135 are disordered; that stretch reads SYDTPPPPMEVSDPRHPSHD. Substrate is bound at residue 183-184; the sequence is GN.

This sequence belongs to the phosphoglycerate mutase family. BPG-dependent PGAM subfamily. In terms of assembly, homodimer.

It catalyses the reaction (2R)-2-phosphoglycerate = (2R)-3-phosphoglycerate. The protein operates within carbohydrate degradation; glycolysis; pyruvate from D-glyceraldehyde 3-phosphate: step 3/5. Functionally, catalyzes the interconversion of 2-phosphoglycerate and 3-phosphoglycerate. The chain is 2,3-bisphosphoglycerate-dependent phosphoglycerate mutase from Bdellovibrio bacteriovorus (strain ATCC 15356 / DSM 50701 / NCIMB 9529 / HD100).